We begin with the raw amino-acid sequence, 318 residues long: Ribose-phosphate pyrophosphokinase (318 aa).

ATP-binding positions include Asp-46–Glu-48 and Arg-105–Gln-106. 2 residues coordinate Mg(2+): His-139 and Asp-178. Residue Lys-201 is part of the active site. D-ribose 5-phosphate is bound by residues Arg-203, Asp-227, and Asp-231–Thr-235.

This sequence belongs to the ribose-phosphate pyrophosphokinase family. Class I subfamily. In terms of assembly, homohexamer. Requires Mg(2+) as cofactor.

The protein resides in the cytoplasm. It carries out the reaction D-ribose 5-phosphate + ATP = 5-phospho-alpha-D-ribose 1-diphosphate + AMP + H(+). The protein operates within metabolic intermediate biosynthesis; 5-phospho-alpha-D-ribose 1-diphosphate biosynthesis; 5-phospho-alpha-D-ribose 1-diphosphate from D-ribose 5-phosphate (route I): step 1/1. Involved in the biosynthesis of the central metabolite phospho-alpha-D-ribosyl-1-pyrophosphate (PRPP) via the transfer of pyrophosphoryl group from ATP to 1-hydroxyl of ribose-5-phosphate (Rib-5-P). This is Ribose-phosphate pyrophosphokinase from Helicobacter pylori (strain ATCC 700392 / 26695) (Campylobacter pylori).